The following is a 427-amino-acid chain: MLDIKWIRENPEALDAALAKRGAEPQAQSLVALDEKRRSAVQKAQDMLSRRNLASKEIGAAMAQKNGELAEKLKAEVAELKTLLPAIEEEDRQLTAELNDALSRIPNIPFDDVPVGKDEHDNVVTRTVGEKPRWNHTPKEHFEIGEALGYMDFERAAKLSGSRFTVLTGPLARLERALGQFMIDLHTREHGYTEVSSPLMVRAEALFGTGNLPKFEEDLFKTTDDRYLIPTAEVTLTNLVREEILEQEKLPLRFTALTPSFRSEAGSAGRDTRGMLRQHQFWKCELVSITDADSAIAEHERMTACAEEVLKRLGLHFRTMTLCTGDMGFGSRKTYDLEVWLPGQNAFREISSCSVCGDFQARRMNARYRGKDDKTNRFVHTLNGSGTAVGRCLIAVLENYLNEDGSVTIPDVLLPYMGGLTKIERAA.

L-serine is bound at residue 231–233; sequence TAE. 262–264 provides a ligand contact to ATP; that stretch reads RSE. Position 285 (Glu-285) interacts with L-serine. 349–352 is a binding site for ATP; it reads EISS. Residue Ser-385 coordinates L-serine.

It belongs to the class-II aminoacyl-tRNA synthetase family. Type-1 seryl-tRNA synthetase subfamily. Homodimer. The tRNA molecule binds across the dimer.

It is found in the cytoplasm. It catalyses the reaction tRNA(Ser) + L-serine + ATP = L-seryl-tRNA(Ser) + AMP + diphosphate + H(+). The enzyme catalyses tRNA(Sec) + L-serine + ATP = L-seryl-tRNA(Sec) + AMP + diphosphate + H(+). It participates in aminoacyl-tRNA biosynthesis; selenocysteinyl-tRNA(Sec) biosynthesis; L-seryl-tRNA(Sec) from L-serine and tRNA(Sec): step 1/1. Its function is as follows. Catalyzes the attachment of serine to tRNA(Ser). Is also able to aminoacylate tRNA(Sec) with serine, to form the misacylated tRNA L-seryl-tRNA(Sec), which will be further converted into selenocysteinyl-tRNA(Sec). The chain is Serine--tRNA ligase from Rhizobium etli (strain CIAT 652).